A 261-amino-acid chain; its full sequence is Cytochrome c oxidase subunit 3 (261 aa).

Residues 1–15 are Mitochondrial matrix-facing; the sequence is MTHQTHSYHMVNPSP. Residues 16 to 34 form a helical membrane-spanning segment; that stretch reads WPLTGALSALLMTSGLIMW. Over 35–40 the chain is Mitochondrial intermembrane; the sequence is FHFNSM. The chain crosses the membrane as a helical span at residues 41-66; it reads ILLTLGLSTNILTMYQWWRDIIREST. Residues 67–72 lie on the Mitochondrial matrix side of the membrane; sequence FQGHHT. The chain crosses the membrane as a helical span at residues 73 to 105; sequence PTVQKGLRYGMILFIVSEVLFFTGFFWAFYHSS. The Mitochondrial intermembrane segment spans residues 106 to 128; that stretch reads LAPTPELGGCWPPTGIHPLNPLE. Residues 129-152 traverse the membrane as a helical segment; the sequence is VPLLNTSVLLASGVSITWAHHSLM. Residues 153–155 lie on the Mitochondrial matrix side of the membrane; it reads EGN. A helical transmembrane segment spans residues 156–183; that stretch reads RKHMLQALFITIALGLYFTLLQASEYYE. Residues 184–190 lie on the Mitochondrial intermembrane side of the membrane; sequence APFTISD. Residues 191–223 form a helical membrane-spanning segment; it reads GIYGSTFFVATGFHGLHVIIGSTFLIVCFLRQV. At 224 to 232 the chain is on the mitochondrial matrix side; the sequence is KFHFTSNHH. The chain crosses the membrane as a helical span at residues 233 to 256; it reads FGFERAAWYWHFVDVVWLFLYVSI. Residues 257–261 lie on the Mitochondrial intermembrane side of the membrane; that stretch reads YWWGS.

It belongs to the cytochrome c oxidase subunit 3 family. As to quaternary structure, component of the cytochrome c oxidase (complex IV, CIV), a multisubunit enzyme composed of 14 subunits. The complex is composed of a catalytic core of 3 subunits MT-CO1, MT-CO2 and MT-CO3, encoded in the mitochondrial DNA, and 11 supernumerary subunits COX4I, COX5A, COX5B, COX6A, COX6B, COX6C, COX7A, COX7B, COX7C, COX8 and NDUFA4, which are encoded in the nuclear genome. The complex exists as a monomer or a dimer and forms supercomplexes (SCs) in the inner mitochondrial membrane with NADH-ubiquinone oxidoreductase (complex I, CI) and ubiquinol-cytochrome c oxidoreductase (cytochrome b-c1 complex, complex III, CIII), resulting in different assemblies (supercomplex SCI(1)III(2)IV(1) and megacomplex MCI(2)III(2)IV(2)).

It is found in the mitochondrion inner membrane. It carries out the reaction 4 Fe(II)-[cytochrome c] + O2 + 8 H(+)(in) = 4 Fe(III)-[cytochrome c] + 2 H2O + 4 H(+)(out). Its function is as follows. Component of the cytochrome c oxidase, the last enzyme in the mitochondrial electron transport chain which drives oxidative phosphorylation. The respiratory chain contains 3 multisubunit complexes succinate dehydrogenase (complex II, CII), ubiquinol-cytochrome c oxidoreductase (cytochrome b-c1 complex, complex III, CIII) and cytochrome c oxidase (complex IV, CIV), that cooperate to transfer electrons derived from NADH and succinate to molecular oxygen, creating an electrochemical gradient over the inner membrane that drives transmembrane transport and the ATP synthase. Cytochrome c oxidase is the component of the respiratory chain that catalyzes the reduction of oxygen to water. Electrons originating from reduced cytochrome c in the intermembrane space (IMS) are transferred via the dinuclear copper A center (CU(A)) of subunit 2 and heme A of subunit 1 to the active site in subunit 1, a binuclear center (BNC) formed by heme A3 and copper B (CU(B)). The BNC reduces molecular oxygen to 2 water molecules using 4 electrons from cytochrome c in the IMS and 4 protons from the mitochondrial matrix. This chain is Cytochrome c oxidase subunit 3 (MT-CO3), found in Balaenoptera musculus (Blue whale).